The sequence spans 356 residues: Thymidine kinase (356 aa).

Residues 1–29 (MMDSRATYVPPKKISESNSNAEEDPTDCS) are disordered. 61-68 (GCVGVGKT) contacts ATP. Catalysis depends on Glu86, which acts as the Proton acceptor. Gln122 is a binding site for substrate. Arg208 is a binding site for ATP. Arg214 contacts substrate.

It belongs to the herpesviridae thymidine kinase family. In terms of assembly, homodimer.

The catalysed reaction is thymidine + ATP = dTMP + ADP + H(+). In terms of biological role, catalyzes the transfer of the gamma-phospho group of ATP to thymidine to generate dTMP in the salvage pathway of pyrimidine synthesis. The dTMP serves as a substrate for DNA polymerase during viral DNA replication. Allows the virus to be reactivated and to grow in non-proliferative cells lacking a high concentration of phosphorylated nucleic acid precursors. This is Thymidine kinase from Elephas maximus (Indian elephant).